The following is a 296-amino-acid chain: Acetyl-coenzyme A carboxylase carboxyl transferase subunit beta (296 aa).

Positions 25 to 294 constitute a CoA carboxyltransferase N-terminal domain; sequence LWIKDPSTGE…NSDAPAPPEA (270 aa).

The protein belongs to the AccD/PCCB family. As to quaternary structure, acetyl-CoA carboxylase is a heterohexamer composed of biotin carboxyl carrier protein (AccB), biotin carboxylase (AccC) and two subunits each of ACCase subunit alpha (AccA) and ACCase subunit beta (AccD).

It is found in the cytoplasm. The catalysed reaction is N(6)-carboxybiotinyl-L-lysyl-[protein] + acetyl-CoA = N(6)-biotinyl-L-lysyl-[protein] + malonyl-CoA. It functions in the pathway lipid metabolism; malonyl-CoA biosynthesis; malonyl-CoA from acetyl-CoA: step 1/1. Component of the acetyl coenzyme A carboxylase (ACC) complex. Biotin carboxylase (BC) catalyzes the carboxylation of biotin on its carrier protein (BCCP) and then the CO(2) group is transferred by the transcarboxylase to acetyl-CoA to form malonyl-CoA. The chain is Acetyl-coenzyme A carboxylase carboxyl transferase subunit beta from Brucella ovis (strain ATCC 25840 / 63/290 / NCTC 10512).